Consider the following 453-residue polypeptide: Pentatricopeptide repeat-containing protein At2g38420, mitochondrial (453 aa).

A mitochondrion-targeting transit peptide spans Met1–Phe77. PPR repeat units follow at residues Pro107–Pro141, Ser142–Leu177, Glu178–Val212, Asp213–Pro249, Gly250–Pro284, Asp285–Pro319, Asp320–Pro354, Asn355–Arg389, and Asn390–Val424.

It belongs to the PPR family. P subfamily.

It localises to the mitochondrion. This chain is Pentatricopeptide repeat-containing protein At2g38420, mitochondrial, found in Arabidopsis thaliana (Mouse-ear cress).